We begin with the raw amino-acid sequence, 442 residues long: MAQFFKAKPNSSKQLSAKVTLEVTKLDHLGAGMAQHQGKIVFIPGALPNEKVTVQLTEQKKRHARAKLLKIESDSNDRVEPKCPHYQQCGGCDLQHLSIDKQRSYKQSALVDLMAKLSHTEAESLAPALIGQEWDYRRRARLATHYNKESKQITLGFRASASKQVINIDVCPVLAKPLSDLIAPLSLLLNQLSGKKALGHLELIDADNGYFAVLRMTKALSDKDAKKLTAFANEKSISLIVQGNEGEFTILGDRNELPYYALDDVKLNFTPGNFIQVNAAINESMVKQAVDWLSVKPNERVLDLFCGVGNFSLPLAKSGAEVIGVEGVPEMVKQARENAADSGLDNVSFFHTDLSADLSKETWLGKVDKLLLDPARAGAFESLQWLKKMKPKAIVYVSCDPSSLARDSEPLLKHGYKLKKLGLIDMFPQTHHIEAMALFELD.

Residues 12 to 70 (SKQLSAKVTLEVTKLDHLGAGMAQHQGKIVFIPGALPNEKVTVQLTEQKKRHARAKLLK) enclose the TRAM domain. [4Fe-4S] cluster is bound by residues C83, C89, C92, and C171. Positions 276, 305, 310, 326, 353, and 373 each coordinate S-adenosyl-L-methionine. Residue C399 is the Nucleophile of the active site.

The protein belongs to the class I-like SAM-binding methyltransferase superfamily. RNA M5U methyltransferase family. RlmD subfamily.

It carries out the reaction uridine(1939) in 23S rRNA + S-adenosyl-L-methionine = 5-methyluridine(1939) in 23S rRNA + S-adenosyl-L-homocysteine + H(+). Catalyzes the formation of 5-methyl-uridine at position 1939 (m5U1939) in 23S rRNA. This Shewanella sediminis (strain HAW-EB3) protein is 23S rRNA (uracil(1939)-C(5))-methyltransferase RlmD.